The sequence spans 282 residues: Transcription factor MYB1 (282 aa).

2 HTH myb-type domains span residues 9 to 61 (KEGL…LNYL) and 62 to 116 (RPDI…SKKV). DNA-binding regions (H-T-H motif) lie at residues 37-61 (WRDL…LNYL) and 89-112 (WSLI…NTYL). The tract at residues 258 to 282 (EDDWKQNGGKDELMGGGNGGPSSVS) is disordered. Over residues 260-270 (DWKQNGGKDEL) the composition is skewed to basic and acidic residues. Over residues 271–282 (MGGGNGGPSSVS) the composition is skewed to gly residues.

The protein resides in the nucleus. Its function is as follows. Transcription activator involved in the spatiotemporal regulation of flavonoid biosynthesis specifically in the corms of Montbretia. Activates the promoters of enzymes involved in the biosynthesis of the flavonol kaempferol and the flavonol-glycoside kaempferol-rhamnoside. The sequence is that of Transcription factor MYB1 from Crocosmia x crocosmiiflora (Montbretia).